The primary structure comprises 143 residues: Spliceosomal protein DIB1 (143 aa).

This sequence belongs to the DIM1 family. In terms of assembly, component of the 25S [U4/U6.U5] tri-snRNP.

The protein localises to the nucleus. Its function is as follows. Essential role in pre-mRNA splicing. Also essential for entry into mitosis (G2/M progression) as well as for chromosome segregation during mitosis. The sequence is that of Spliceosomal protein DIB1 (DIB1) from Eremothecium gossypii (strain ATCC 10895 / CBS 109.51 / FGSC 9923 / NRRL Y-1056) (Yeast).